We begin with the raw amino-acid sequence, 200 residues long: Large ribosomal subunit protein bL9 (200 aa).

Belongs to the bacterial ribosomal protein bL9 family.

In terms of biological role, binds to the 23S rRNA. The chain is Large ribosomal subunit protein bL9 from Ruegeria pomeroyi (strain ATCC 700808 / DSM 15171 / DSS-3) (Silicibacter pomeroyi).